Here is a 210-residue protein sequence, read N- to C-terminus: Ribosomal RNA small subunit methyltransferase G (210 aa).

Residues glycine 76, leucine 81, 127–128 (VE), and arginine 142 each bind S-adenosyl-L-methionine.

This sequence belongs to the methyltransferase superfamily. RNA methyltransferase RsmG family.

The protein resides in the cytoplasm. The catalysed reaction is guanosine(527) in 16S rRNA + S-adenosyl-L-methionine = N(7)-methylguanosine(527) in 16S rRNA + S-adenosyl-L-homocysteine. Its function is as follows. Specifically methylates the N7 position of guanine in position 527 of 16S rRNA. This Vibrio cholerae serotype O1 (strain ATCC 39315 / El Tor Inaba N16961) protein is Ribosomal RNA small subunit methyltransferase G.